A 502-amino-acid chain; its full sequence is Probable cytochrome P450 554A1 (502 aa).

A helical membrane pass occupies residues Leu-3–Tyr-20. Cys-448 serves as a coordination point for heme.

It belongs to the cytochrome P450 family. Heme is required as a cofactor.

It localises to the membrane. The protein is Probable cytochrome P450 554A1 (cyp554A1) of Dictyostelium discoideum (Social amoeba).